We begin with the raw amino-acid sequence, 724 residues long: NAD(+) hydrolase SARM1 (724 aa).

The transit peptide at 1–27 directs the protein to the mitochondrion; the sequence is MVLTLLFSAYKLCRFFTMSGPRPGADR. The tract at residues 24–56 is disordered; sequence GADRLTVPGPDRSGGASPWWAAGGRGSREVSPG. Residues 36 to 45 show a composition bias toward low complexity; the sequence is SGGASPWWAA. The ARM 1 repeat unit spans residues 60–100; it reads EVQGALERSLPELQQALSELKQASAARAVGAGLAEVFQLVE. NAD(+) contacts are provided by residues W103, R110, 149–157, and 190–193; these read EQILVAENR and HMFK. 7 ARM repeats span residues 114–153, 155–193, 196–235, 237–280, 281–314, 315–354, and 359–402; these read QGLC…QILV, ENRD…HMFK, EETC…NCAL, GGQT…LATN, KEVE…CLVD, ASDT…AEAA, and QGKT…EEVP. SAM domains follow at residues 412-476 and 486-548; these read WKEA…LKTF and NLAD…MLHS. Phosphoserine occurs at positions 548 and 558. The 144-residue stretch at 560–703 folds into the TIR domain; that stretch reads DTPDVFISYR…KIIRFLQGRP (144 aa). NAD(+)-binding positions include 569 to 570 and E599; that span reads RR. E642 is an active-site residue. The span at 703 to 716 shows a compositional bias: polar residues; that stretch reads PSQDSSAGSDTSLE. The tract at residues 703–724 is disordered; the sequence is PSQDSSAGSDTSLEGATPMGLP.

This sequence belongs to the SARM1 family. Homooctamer; forms an octameric ring via SAM domains. Interacts with TICAM1/TRIF and thereby interferes with TICAM1/TRIF function. Interacts with SDC2 (via cytoplasmic domain) and MAPK10/JNK3. Post-translationally, phosphorylation at Ser-548 by JNK kinases (MAPK8, MAPK9 and /or MAPK10) enhance the NAD(+) hydrolase (NADase) activity. Phosphorylation at Ser-548 and subsequent activation takes place in response to oxidative stress conditions and inhibits mitochondrial respiration. Widely expressed in the brain and neurons (at protein level). Expressed in photoreceptor cells of the neural retina.

It localises to the cytoplasm. The protein localises to the cell projection. The protein resides in the axon. Its subcellular location is the dendrite. It is found in the synapse. It localises to the mitochondrion. The catalysed reaction is NAD(+) + H2O = ADP-D-ribose + nicotinamide + H(+). It catalyses the reaction NAD(+) = cyclic ADP-beta-D-ribose + nicotinamide + H(+). It carries out the reaction NADP(+) + H2O = ADP-D-ribose 2'-phosphate + nicotinamide + H(+). Autoinhibited: in the inactive state, the enzymatic TIR domain is held apart by the autoinhibiting ARM repeats. NAD(+)-binding to ARM repeats maintains an inactive state by promoting interaction between ARM repeats and the TIR domain, thereby facilitating inhibition of the enzymatic TIR domain. Following activation, possibly by nicotinamide mononucleotide (NMN), auto-inhibitory interactions are released, allowing self-association of the TIR domains and subsequent activation of the NAD(+) hydrolase (NADase) activity. Self-association of TIR domains is facilitated by the octamer of SAM domains. Functionally, NAD(+) hydrolase, which plays a key role in axonal degeneration following injury by regulating NAD(+) metabolism. Acts as a negative regulator of MYD88- and TRIF-dependent toll-like receptor signaling pathway by promoting Wallerian degeneration, an injury-induced form of programmed subcellular death which involves degeneration of an axon distal to the injury site. Wallerian degeneration is triggered by NAD(+) depletion: in response to injury, SARM1 is activated and catalyzes cleavage of NAD(+) into ADP-D-ribose (ADPR), cyclic ADPR (cADPR) and nicotinamide; NAD(+) cleavage promoting cytoskeletal degradation and axon destruction. Also able to hydrolyze NADP(+), but not other NAD(+)-related molecules. Can activate neuronal cell death in response to stress. Regulates dendritic arborization through the MAPK4-JNK pathway. Involved in innate immune response: inhibits both TICAM1/TRIF- and MYD88-dependent activation of JUN/AP-1, TRIF-dependent activation of NF-kappa-B and IRF3, and the phosphorylation of MAPK14/p38. In Mus musculus (Mouse), this protein is NAD(+) hydrolase SARM1.